Here is a 156-residue protein sequence, read N- to C-terminus: Ribosome maturation factor RimP (156 aa).

This sequence belongs to the RimP family.

It is found in the cytoplasm. Functionally, required for maturation of 30S ribosomal subunits. The protein is Ribosome maturation factor RimP of Dictyoglomus thermophilum (strain ATCC 35947 / DSM 3960 / H-6-12).